Reading from the N-terminus, the 205-residue chain is Protein phosphatase inhibitor 2 (205 aa).

The segment at 1 to 44 (MAASTASHRPIKGILKNKTSTTSSMVASAEQPRGNVDEELSKKS) is disordered. Ala2 is subject to N-acetylalanine. Required for binding PPP1CC stretches follow at residues 12 to 17 (KGILKN) and 43 to 55 (KSQKWDEMNILAT). The segment covering 17–26 (NKTSTTSSMV) has biased composition (polar residues). Residues 35–44 (NVDEELSKKS) are compositionally biased toward basic and acidic residues. Ser44 is modified (phosphoserine; by ATM). Phosphothreonine; by GSK3 is present on Thr73. The residue at position 87 (Ser87) is a Phosphoserine. Phosphothreonine is present on residues Thr89 and Thr92. A disordered region spans residues 111-142 (EPKYRIQEQESSGEEDSDLSPEEREKKRQFEM). Ser121, Ser122, Ser127, and Ser130 each carry phosphoserine. Acidic residues predominate over residues 121–130 (SSGEEDSDLS). A compositionally biased stretch (basic and acidic residues) spans 131–142 (PEEREKKRQFEM). The required for binding PPP1CC catalytic center, displacing metal ions and inhibition of PPP1CC catalytic activity stretch occupies residues 147 to 150 (HYNE). A disordered region spans residues 163–205 (KDLHDDDEDEEMLETADGESMNTEESNQGSTPSDQQQNKLRSS). Positions 167–179 (DDDEDEEMLETAD) are enriched in acidic residues. The span at 182–205 (SMNTEESNQGSTPSDQQQNKLRSS) shows a compositional bias: polar residues.

It belongs to the protein phosphatase inhibitor 2 family. In terms of assembly, heterodimer with PP1. Post-translationally, phosphorylation on Thr-73 by GSK3 activates PP1 by dissociating the PP1-PPP1R2 complex. Phosphorylation on Ser-44 by ATM activates PP1 by dissociating the PP1-PPP1R2 complex.

Functionally, inhibitor of protein-phosphatase 1. The protein is Protein phosphatase inhibitor 2 (PPP1R2) of Homo sapiens (Human).